Here is a 196-residue protein sequence, read N- to C-terminus: Dephospho-CoA kinase (196 aa).

The DPCK domain occupies 5–196; the sequence is IIGLTGGIAT…QVDIALNFEL (192 aa). 13 to 18 contributes to the ATP binding site; that stretch reads ATGKTT.

It belongs to the CoaE family.

It localises to the cytoplasm. It carries out the reaction 3'-dephospho-CoA + ATP = ADP + CoA + H(+). The protein operates within cofactor biosynthesis; coenzyme A biosynthesis; CoA from (R)-pantothenate: step 5/5. Catalyzes the phosphorylation of the 3'-hydroxyl group of dephosphocoenzyme A to form coenzyme A. This Trichormus variabilis (strain ATCC 29413 / PCC 7937) (Anabaena variabilis) protein is Dephospho-CoA kinase.